The primary structure comprises 198 residues: MSSYLLVLVAILGFAYAEGDYSLCQQREKLDDDMREMFTELHNGYRAAFARNYKTSKMRTMVYDCTLEEKAYKSAEKCSEEPSSEEENVDVFSAATLNIPLEAGNSWWSEIFELRGKVYNKNGKTSNIANMVWDSHDKLGCAVVDCSGKTHVVCQYGPEAKGDGKTIYEEGAPCSRCSDYGAGVTCDDDWQNLLCIGH.

The N-terminal stretch at 1–17 is a signal peptide; that stretch reads MSSYLLVLVAILGFAYA. 5 disulfide bridges follow: Cys24-Cys65, Cys78-Cys146, Cys141-Cys154, Cys174-Cys186, and Cys177-Cys195.

This sequence belongs to the CRISP family. Monomer. Detected in cephalic glands.

Its subcellular location is the secreted. Hookworms inhibitor of platelet aggregation and adhesion. Native protein inhibits platelet aggregation induced by ADP, epinephrine, and thrombin. In addition, it prevents adhesion of resting platelets to immobilized fibrinogen and collagen. May act by binding to glycoprotein IIb/IIIa (ITGA2B/ITGB3) and integrin alpha-2/beta-1 (ITGA1/ITGB1), respectively. It is noteworthy that the recombinant protein fails to inhibit binding to fibrinogen (through ITGA2B/ITGB3) and collagen (through ITGA1/ITGB1). The polypeptide is Hookworm platelet inhibitor 1 (Ancylostoma caninum (Dog hookworm)).